Here is a 141-residue protein sequence, read N- to C-terminus: Nucleoside diphosphate kinase (141 aa).

ATP contacts are provided by K11, F59, R87, T93, R104, and N114. H117 functions as the Pros-phosphohistidine intermediate in the catalytic mechanism.

The protein belongs to the NDK family. In terms of assembly, homotetramer. Mg(2+) is required as a cofactor.

Its subcellular location is the cytoplasm. The catalysed reaction is a 2'-deoxyribonucleoside 5'-diphosphate + ATP = a 2'-deoxyribonucleoside 5'-triphosphate + ADP. It carries out the reaction a ribonucleoside 5'-diphosphate + ATP = a ribonucleoside 5'-triphosphate + ADP. Major role in the synthesis of nucleoside triphosphates other than ATP. The ATP gamma phosphate is transferred to the NDP beta phosphate via a ping-pong mechanism, using a phosphorylated active-site intermediate. In Actinobacillus succinogenes (strain ATCC 55618 / DSM 22257 / CCUG 43843 / 130Z), this protein is Nucleoside diphosphate kinase.